The chain runs to 271 residues: Uridine-cytidine kinase 1-A (271 aa).

Glycine 24–threonine 32 serves as a coordination point for ATP. Substrate contacts are provided by aspartate 81, tyrosine 109, histidine 114, arginine 163, arginine 172, and glutamine 180. Aspartate 209 contributes to the ATP binding site. A disordered region spans residues serine 241–histidine 271. Basic and acidic residues predominate over residues threonine 262–histidine 271.

The protein belongs to the uridine kinase family.

It catalyses the reaction uridine + ATP = UMP + ADP + H(+). The enzyme catalyses cytidine + ATP = CMP + ADP + H(+). The protein operates within pyrimidine metabolism; CTP biosynthesis via salvage pathway; CTP from cytidine: step 1/3. It functions in the pathway pyrimidine metabolism; UMP biosynthesis via salvage pathway; UMP from uridine: step 1/1. Phosphorylates uridine and cytidine to uridine monophosphate and cytidine monophosphate. Does not phosphorylate deoxyribonucleosides or purine ribonucleosides. Can use ATP or GTP as a phosphate donor. The protein is Uridine-cytidine kinase 1-A (uck1-a) of Xenopus laevis (African clawed frog).